The chain runs to 446 residues: tRNA-2-methylthio-N(6)-dimethylallyladenosine synthase (446 aa).

In terms of domain architecture, MTTase N-terminal spans 5-121 (RRFYIQTFGC…LPSLIDDAAS (117 aa)). The [4Fe-4S] cluster site is built by Cys14, Cys50, Cys84, Cys157, Cys161, and Cys164. The Radical SAM core domain occupies 143–373 (REGRISAFIP…IDLQQEISAE (231 aa)). The TRAM domain maps to 376-439 (RRQVGTVAEV…SATLSGSREG (64 aa)).

Belongs to the methylthiotransferase family. MiaB subfamily. In terms of assembly, monomer. The cofactor is [4Fe-4S] cluster.

Its subcellular location is the cytoplasm. It catalyses the reaction N(6)-dimethylallyladenosine(37) in tRNA + (sulfur carrier)-SH + AH2 + 2 S-adenosyl-L-methionine = 2-methylsulfanyl-N(6)-dimethylallyladenosine(37) in tRNA + (sulfur carrier)-H + 5'-deoxyadenosine + L-methionine + A + S-adenosyl-L-homocysteine + 2 H(+). In terms of biological role, catalyzes the methylthiolation of N6-(dimethylallyl)adenosine (i(6)A), leading to the formation of 2-methylthio-N6-(dimethylallyl)adenosine (ms(2)i(6)A) at position 37 in tRNAs that read codons beginning with uridine. This Chlorobium luteolum (strain DSM 273 / BCRC 81028 / 2530) (Pelodictyon luteolum) protein is tRNA-2-methylthio-N(6)-dimethylallyladenosine synthase.